A 424-amino-acid chain; its full sequence is Serine hydroxymethyltransferase 2 (424 aa).

(6S)-5,6,7,8-tetrahydrofolate-binding positions include Leu125 and 129 to 131; that span reads GHL. Residue Lys234 is modified to N6-(pyridoxal phosphate)lysine. Glu250 lines the (6S)-5,6,7,8-tetrahydrofolate pocket.

It belongs to the SHMT family. Homodimer. It depends on pyridoxal 5'-phosphate as a cofactor.

It localises to the cytoplasm. It catalyses the reaction (6R)-5,10-methylene-5,6,7,8-tetrahydrofolate + glycine + H2O = (6S)-5,6,7,8-tetrahydrofolate + L-serine. Its pathway is one-carbon metabolism; tetrahydrofolate interconversion. It participates in amino-acid biosynthesis; glycine biosynthesis; glycine from L-serine: step 1/1. Functionally, catalyzes the reversible interconversion of serine and glycine with tetrahydrofolate (THF) serving as the one-carbon carrier. This reaction serves as the major source of one-carbon groups required for the biosynthesis of purines, thymidylate, methionine, and other important biomolecules. Also exhibits THF-independent aldolase activity toward beta-hydroxyamino acids, producing glycine and aldehydes, via a retro-aldol mechanism. The chain is Serine hydroxymethyltransferase 2 from Ralstonia nicotianae (strain ATCC BAA-1114 / GMI1000) (Ralstonia solanacearum).